The sequence spans 483 residues: Probable 4-hydroxyphenylacetate 3-monooxygenase (483 aa).

Substrate is bound by residues 104–108 (RSPDY) and histidine 150. Residues 150-152 (HTF), 156-159 (QVNR), and threonine 193 each bind FAD. 206 to 207 (AP) is a binding site for substrate. FAD is bound at residue 452–455 (DPIR).

Belongs to the FADH(2)-utilizing monooxygenase family.

The catalysed reaction is 4-hydroxyphenylacetate + FADH2 + O2 = 3,4-dihydroxyphenylacetate + FAD + H2O + H(+). The protein operates within aromatic compound metabolism; 4-hydroxyphenylacetate degradation; pyruvate and succinate semialdehyde from 4-hydroxyphenylacetate: step 1/7. Its function is as follows. Catalyzes the hydroxylation of 4-hydroxyphenylacetic acid (4HPA), leading to the production of 3,4-dihydroxyphenylacetic acid (DHPA). This Bacillus subtilis (strain 168) protein is Probable 4-hydroxyphenylacetate 3-monooxygenase (yoaI).